The chain runs to 571 residues: Protein E6 homolog (571 aa).

The protein belongs to the chordopoxvirinae E6 family.

It is found in the virion. Late protein which may play a role in the virion morphogenesis and have therefore an indirect role on viral transcription ability. This is Protein E6 homolog from Vertebrata (FPV).